The chain runs to 566 residues: 2-isopropylmalate synthase (566 aa).

A Pyruvate carboxyltransferase domain is found at 32–306 (PLWCAVDLRD…DPQIDFSNID (275 aa)). 4 residues coordinate Mg(2+): aspartate 41, histidine 245, histidine 247, and asparagine 281. A regulatory domain region spans residues 451–566 (PVRPLERIKQ…VVSAINRASR (116 aa)).

It belongs to the alpha-IPM synthase/homocitrate synthase family. LeuA type 2 subfamily. In terms of assembly, homodimer. Mg(2+) is required as a cofactor.

The protein resides in the cytoplasm. The enzyme catalyses 3-methyl-2-oxobutanoate + acetyl-CoA + H2O = (2S)-2-isopropylmalate + CoA + H(+). It functions in the pathway amino-acid biosynthesis; L-leucine biosynthesis; L-leucine from 3-methyl-2-oxobutanoate: step 1/4. Functionally, catalyzes the condensation of the acetyl group of acetyl-CoA with 3-methyl-2-oxobutanoate (2-ketoisovalerate) to form 3-carboxy-3-hydroxy-4-methylpentanoate (2-isopropylmalate). In Mycobacterium ulcerans (strain Agy99), this protein is 2-isopropylmalate synthase.